A 252-amino-acid polypeptide reads, in one-letter code: 5'-nucleotidase SurE (252 aa).

Residues Asp8, Asp9, Ser39, and Asn91 each contribute to the a divalent metal cation site.

This sequence belongs to the SurE nucleotidase family. A divalent metal cation is required as a cofactor.

Its subcellular location is the cytoplasm. It carries out the reaction a ribonucleoside 5'-phosphate + H2O = a ribonucleoside + phosphate. Functionally, nucleotidase that shows phosphatase activity on nucleoside 5'-monophosphates. The chain is 5'-nucleotidase SurE from Gemmatimonas aurantiaca (strain DSM 14586 / JCM 11422 / NBRC 100505 / T-27).